The sequence spans 318 residues: GTP 3',8-cyclase (318 aa).

A Radical SAM core domain is found at 4-218 (KHGRNIDYLR…MSRSDLIPIE (215 aa)). Arg13 serves as a coordination point for GTP. Residues Cys20 and Cys24 each coordinate [4Fe-4S] cluster. Tyr26 provides a ligand contact to S-adenosyl-L-methionine. A [4Fe-4S] cluster-binding site is contributed by Cys27. Arg62 lines the GTP pocket. An S-adenosyl-L-methionine-binding site is contributed by Gly66. Thr93 is a binding site for GTP. Ser117 contacts S-adenosyl-L-methionine. Position 154 (Lys154) interacts with GTP. Met188 contacts S-adenosyl-L-methionine. Cys248 and Cys251 together coordinate [4Fe-4S] cluster. 253-255 (KIR) contacts GTP. Residue Cys265 coordinates [4Fe-4S] cluster.

This sequence belongs to the radical SAM superfamily. MoaA family. Monomer and homodimer. Requires [4Fe-4S] cluster as cofactor.

The catalysed reaction is GTP + AH2 + S-adenosyl-L-methionine = (8S)-3',8-cyclo-7,8-dihydroguanosine 5'-triphosphate + 5'-deoxyadenosine + L-methionine + A + H(+). The protein operates within cofactor biosynthesis; molybdopterin biosynthesis. In terms of biological role, catalyzes the cyclization of GTP to (8S)-3',8-cyclo-7,8-dihydroguanosine 5'-triphosphate. This Clostridium acetobutylicum (strain ATCC 824 / DSM 792 / JCM 1419 / IAM 19013 / LMG 5710 / NBRC 13948 / NRRL B-527 / VKM B-1787 / 2291 / W) protein is GTP 3',8-cyclase.